The following is a 593-amino-acid chain: Methionine--tRNA ligase, mitochondrial (593 aa).

The N-terminal 29 residues, 1-29 (MLRVSAFRLLGRRGASRVSLLEDFSFRYY), are a transit peptide targeting the mitochondrion. A 'HIGH' region motif is present at residues 52-62 (FYVNAAPHIGH). Positions 347 to 351 (KMSKS) match the 'KMSKS' region motif. Residue K350 coordinates ATP.

It belongs to the class-I aminoacyl-tRNA synthetase family.

The protein localises to the mitochondrion matrix. The catalysed reaction is tRNA(Met) + L-methionine + ATP = L-methionyl-tRNA(Met) + AMP + diphosphate. The chain is Methionine--tRNA ligase, mitochondrial (MARS2) from Bos taurus (Bovine).